We begin with the raw amino-acid sequence, 21 residues long: Cupiennin-6b (21 aa).

A Serine amide modification is found at Ser-21.

In terms of tissue distribution, expressed by the venom gland.

The protein resides in the secreted. This chain is Cupiennin-6b, found in Cupiennius salei (American wandering spider).